The primary structure comprises 270 residues: Phosphatidylglycerol--prolipoprotein diacylglyceryl transferase (270 aa).

4 helical membrane-spanning segments follow: residues 19-39 (FPVY…LWLA), 56-76 (LVLI…VIFE), 92-112 (QGGL…ILFA), and 116-136 (GVSF…GQAI). Residue R138 coordinates a 1,2-diacyl-sn-glycero-3-phospho-(1'-sn-glycerol). The next 3 helical transmembrane spans lie at 178–198 (HPTF…LLAL), 206–226 (GELF…VEGL), and 236–256 (LRIA…FIIV).

The protein belongs to the Lgt family.

Its subcellular location is the cell membrane. The enzyme catalyses L-cysteinyl-[prolipoprotein] + a 1,2-diacyl-sn-glycero-3-phospho-(1'-sn-glycerol) = an S-1,2-diacyl-sn-glyceryl-L-cysteinyl-[prolipoprotein] + sn-glycerol 1-phosphate + H(+). It participates in protein modification; lipoprotein biosynthesis (diacylglyceryl transfer). Catalyzes the transfer of the diacylglyceryl group from phosphatidylglycerol to the sulfhydryl group of the N-terminal cysteine of a prolipoprotein, the first step in the formation of mature lipoproteins. This is Phosphatidylglycerol--prolipoprotein diacylglyceryl transferase from Bacillus thuringiensis subsp. konkukian (strain 97-27).